Here is a 146-residue protein sequence, read N- to C-terminus: Acidic phospholipase A2 CM-II (146 aa).

Residues 1-21 (MNPAHLLILAAVCVSPLGAFS) form the signal peptide. A propeptide spanning residues 22 to 27 (NRPMPL) is cleaved from the precursor. Cystine bridges form between C38-C98, C53-C145, C55-C71, C70-C126, C77-C119, C87-C112, and C105-C117. Residues Y54, G56, and G58 each contribute to the Ca(2+) site. H74 is an active-site residue. Ca(2+) is bound at residue D75. D120 is a catalytic residue.

Belongs to the phospholipase A2 family. Group I subfamily. D49 sub-subfamily. The cofactor is Ca(2+). Expressed by the venom gland.

The protein localises to the secreted. The catalysed reaction is a 1,2-diacyl-sn-glycero-3-phosphocholine + H2O = a 1-acyl-sn-glycero-3-phosphocholine + a fatty acid + H(+). PLA2 catalyzes the calcium-dependent hydrolysis of the 2-acyl groups in 3-sn-phosphoglycerides. Is able to suppress the acetylcholine (ACh)-evoked current mediated by alpha-7 (CHRNA7)-similar nAChRs in L.stagnalis neurons (IC(50)=37 nM) and to compete with alpha-bungarotoxin for binding to muscle- and alpha-7 neuronal nAChR types, as well as to AChBPs. In inhibition of alpha-bungarotoxin binding, this toxin is similarly active against T.californica nAChR (IC(50)=1.2 uM), human alpha-7 nAChR (IC(50)=3.2 uM), and L.stagnalis AChBP (IC(50)=1.0 uM), whereas it is not active against A.californica AChBP (IC(50)&gt;100 uM). This is Acidic phospholipase A2 CM-II from Naja kaouthia (Monocled cobra).